The chain runs to 134 residues: RxLR effector protein Avh238 (134 aa).

Residues 1 to 21 (MRGVFFVAVAVAIFARSSAEA) form the signal peptide. Residues 44-68 (RFLRVADPEDDDLAAPADDGKTEER) carry the RxLR-dEER motif. The disordered stretch occupies residues 49 to 70 (ADPEDDDLAAPADDGKTEERAP). Residues 61–70 (DDGKTEERAP) are compositionally biased toward basic and acidic residues.

It belongs to the RxLR effector family. Interacts with host 1-aminocyclopropane-1-carboxylate synthases ACS1, ACS2, ACS3, ACS10 and ACS12.

The protein localises to the secreted. It localises to the host cytoplasm. The protein resides in the host nucleus. Effector that suppresses plant defense responses during the early stages of pathogen infection. Suppresses cell death induced by effectors and PAMPs in plant hosts. Is able to induced cell death in tomato, tobacco, eggplant, and potato, but not in A.thaliana. Interacts with and destabilizes host 1-aminocyclopropane-1-carboxylate synthases. By suppressing type2 ACS-catalyzed ethylene biosynthesis, Avh238 facilitates Phytophthora infection. The sequence is that of RxLR effector protein Avh238 (Avh238) from Phytophthora sojae (strain P6497) (Soybean stem and root rot agent).